The chain runs to 374 residues: CMP-N-acetylneuraminate-beta-1,4-galactoside alpha-2,3-sialyltransferase (374 aa).

The Cytoplasmic portion of the chain corresponds to 1-8; sequence MGLLVFVR. Residues 9–28 traverse the membrane as a helical; Signal-anchor for type II membrane protein segment; the sequence is NLLLALCLFLVLGFLYYSAW. Over 29-374 the chain is Lumenal; that stretch reads KLHLLQWEDS…RVITDLSSGI (346 aa). Asn-79 and Asn-170 each carry an N-linked (GlcNAc...) asparagine glycan. A disulfide bridge connects residues Cys-159 and Cys-313.

Belongs to the glycosyltransferase 29 family. As to expression, found in all tissues tested. High expression found in brain, liver, kidney, colon, heart and spleen.

Its subcellular location is the membrane. The protein resides in the golgi apparatus. The protein localises to the golgi stack membrane. It catalyses the reaction a beta-D-galactosyl-(1-&gt;4)-N-acetyl-beta-D-glucosaminyl derivative + CMP-N-acetyl-beta-neuraminate = an N-acetyl-alpha-neuraminyl-(2-&gt;3)-beta-D-galactosyl-(1-&gt;4)-N-acetyl-beta-D-glucosaminyl derivative + CMP + H(+). Its pathway is protein modification; protein glycosylation. Functionally, catalyzes the formation of the NeuAc-alpha-2,3-Gal-beta-1,4-GlcNAc-, NeuAc-alpha-2,3-Gal-beta-1,3-GlcNAc- and NeuAc-alpha-2,3-Gal-beta-1,3-GalNAc- sequences found in terminal carbohydrate groups of glycoproteins and glycolipids. The highest activity is toward Gal-beta-1,3-GlcNAc and the lowest toward Gal-beta-1,3-GalNAc. The polypeptide is CMP-N-acetylneuraminate-beta-1,4-galactoside alpha-2,3-sialyltransferase (St3gal3) (Mus musculus (Mouse)).